The primary structure comprises 397 residues: Tryptophan synthase beta chain (397 aa).

Lys90 is subject to N6-(pyridoxal phosphate)lysine.

Belongs to the TrpB family. Tetramer of two alpha and two beta chains. The cofactor is pyridoxal 5'-phosphate.

The catalysed reaction is (1S,2R)-1-C-(indol-3-yl)glycerol 3-phosphate + L-serine = D-glyceraldehyde 3-phosphate + L-tryptophan + H2O. It participates in amino-acid biosynthesis; L-tryptophan biosynthesis; L-tryptophan from chorismate: step 5/5. In terms of biological role, the beta subunit is responsible for the synthesis of L-tryptophan from indole and L-serine. The sequence is that of Tryptophan synthase beta chain from Nitrosomonas europaea (strain ATCC 19718 / CIP 103999 / KCTC 2705 / NBRC 14298).